Consider the following 46-residue polypeptide: Elongation factor Tu (46 aa).

The span at M1–K10 shows a compositional bias: basic and acidic residues. The segment at M1–H20 is disordered. G19–T26 contacts GTP.

This sequence belongs to the GTP-binding elongation factor family. EF-Tu/EF-1A subfamily. Monomer.

It is found in the cytoplasm. This protein promotes the GTP-dependent binding of aminoacyl-tRNA to the A-site of ribosomes during protein biosynthesis. This chain is Elongation factor Tu (tufA), found in Eikenella corrodens.